Reading from the N-terminus, the 660-residue chain is Transcription activator of gluconeogenesis CHGG_09150 (660 aa).

Positions 1 to 12 (MSDSENEYDETD) are enriched in acidic residues. A disordered region spans residues 1–52 (MSDSENEYDETDQLVKEEDEKMSDQRLTSEGADTSAEPKKKYDPKDPLRPRR). 2 stretches are compositionally biased toward basic and acidic residues: residues 13–24 (QLVKEEDEKMSD) and 36–49 (AEPK…DPLR). Positions 59-87 (CFACQRAHLTCGDERPCQRCIKRNLMESC) form a DNA-binding region, zn(2)-C6 fungal-type. Disordered stretches follow at residues 98-144 (LHDA…TFFS), 170-191 (FANQ…QISG), and 319-368 (PTSI…RQSN). A compositionally biased stretch (polar residues) spans 129-144 (SIQTSEASSNQGTFFS). The span at 173–184 (QQSPTSPSFQTS) shows a compositional bias: low complexity. 2 stretches are compositionally biased toward polar residues: residues 320 to 332 (TSIQ…TNSP) and 344 to 368 (TMAT…RQSN). The PAS domain maps to 455–526 (SLLEYEEFMH…NSKARVGLAT (72 aa)). The tract at residues 587-613 (APDKDDGTGESSTDGQLPQKDPRNSIL) is disordered.

This sequence belongs to the ERT1/acuK family.

It localises to the nucleus. In terms of biological role, transcription factor which regulates nonfermentable carbon utilization. Activator of gluconeogenetic genes. This Chaetomium globosum (strain ATCC 6205 / CBS 148.51 / DSM 1962 / NBRC 6347 / NRRL 1970) (Soil fungus) protein is Transcription activator of gluconeogenesis CHGG_09150.